Consider the following 509-residue polypeptide: 2,3-bisphosphoglycerate-independent phosphoglycerate mutase (509 aa).

Positions 14 and 64 each coordinate Mn(2+). Ser-64 (phosphoserine intermediate) is an active-site residue. Substrate-binding positions include His-125, 155–156, Arg-187, Arg-193, 259–262, and Lys-332; these read RD and RADR. Mn(2+) contacts are provided by Asp-399, His-403, Asp-440, His-441, and His-459.

This sequence belongs to the BPG-independent phosphoglycerate mutase family. In terms of assembly, monomer. It depends on Mn(2+) as a cofactor.

The catalysed reaction is (2R)-2-phosphoglycerate = (2R)-3-phosphoglycerate. The protein operates within carbohydrate degradation; glycolysis; pyruvate from D-glyceraldehyde 3-phosphate: step 3/5. Its function is as follows. Catalyzes the interconversion of 2-phosphoglycerate and 3-phosphoglycerate. This is 2,3-bisphosphoglycerate-independent phosphoglycerate mutase from Aeromonas salmonicida (strain A449).